Here is an 86-residue protein sequence, read N- to C-terminus: Small ribosomal subunit protein uS17 (86 aa).

It belongs to the universal ribosomal protein uS17 family. In terms of assembly, part of the 30S ribosomal subunit.

Functionally, one of the primary rRNA binding proteins, it binds specifically to the 5'-end of 16S ribosomal RNA. The sequence is that of Small ribosomal subunit protein uS17 from Halorhodospira halophila (strain DSM 244 / SL1) (Ectothiorhodospira halophila (strain DSM 244 / SL1)).